The chain runs to 128 residues: Cytochrome c-type biogenesis protein CcmE (128 aa).

Topologically, residues Met-1–Arg-8 are cytoplasmic. The helical; Signal-anchor for type II membrane protein transmembrane segment at Leu-9–Asn-29 threads the bilayer. The Periplasmic portion of the chain corresponds to Leu-30 to Ser-128. Residues His-120 and Tyr-124 each coordinate heme.

This sequence belongs to the CcmE/CycJ family.

It is found in the cell inner membrane. Heme chaperone required for the biogenesis of c-type cytochromes. Transiently binds heme delivered by CcmC and transfers the heme to apo-cytochromes in a process facilitated by CcmF and CcmH. The protein is Cytochrome c-type biogenesis protein CcmE of Rickettsia felis (strain ATCC VR-1525 / URRWXCal2) (Rickettsia azadi).